The chain runs to 30 residues: Fibrinogen (30 aa).

In terms of assembly, homodimer. As to expression, secreted into the hemolymph.

It localises to the secreted. The protein resides in the extracellular space. Clotting protein. The chain is Fibrinogen from Panulirus interruptus (California spiny lobster).